The sequence spans 232 residues: Orotidine 5'-phosphate decarboxylase (232 aa).

Substrate contacts are provided by residues D10, K32, 59–68, T119, R180, Q189, G209, and R210; that span reads DLKFHDIPNT. K61 (proton donor) is an active-site residue.

The protein belongs to the OMP decarboxylase family. Type 1 subfamily. Homodimer.

The enzyme catalyses orotidine 5'-phosphate + H(+) = UMP + CO2. The protein operates within pyrimidine metabolism; UMP biosynthesis via de novo pathway; UMP from orotate: step 2/2. Catalyzes the decarboxylation of orotidine 5'-monophosphate (OMP) to uridine 5'-monophosphate (UMP). In Actinobacillus succinogenes (strain ATCC 55618 / DSM 22257 / CCUG 43843 / 130Z), this protein is Orotidine 5'-phosphate decarboxylase.